The chain runs to 574 residues: Septation ring formation regulator EzrA (574 aa).

Topologically, residues 1-7 (MSNGLII) are extracellular. Residues 8–26 (LIIVIAVALILAYVAAVVL) traverse the membrane as a helical segment. At 27 to 574 (RKRNETLLDS…YEKTRENIRF (548 aa)) the chain is on the cytoplasmic side. Coiled coils occupy residues 104 to 141 (LKAKHAIDSIESQINLVEEDIELIREALADLEKQEAKN), 267 to 424 (NITQ…QKVN), and 456 to 524 (ASDH…SIQE).

It belongs to the EzrA family.

The protein localises to the cell membrane. Its function is as follows. Negative regulator of FtsZ ring formation; modulates the frequency and position of FtsZ ring formation. Inhibits FtsZ ring formation at polar sites. Interacts either with FtsZ or with one of its binding partners to promote depolymerization. The polypeptide is Septation ring formation regulator EzrA (Streptococcus gordonii (strain Challis / ATCC 35105 / BCRC 15272 / CH1 / DL1 / V288)).